Reading from the N-terminus, the 438-residue chain is MADYQGKNVVIIGLGLTGLSCVDFFLARGVTPRVMDTRMTPPGLDKLPEAVERHTGSLNDEWLMAADLIVASPGIALAHPSLSAAADAGIEIVGDIELFCREAQAPIVAITGSNGKSTVTTLVGEMAKAAGVNVGVGGNIGLPALMLLDAECELYVLELSSFQLETTSSLQAVAATILNVTEDHMDRYPFGLQQYRAAKLRIYENAKVCVVNADDALTMPIRGADERCVSFGVNMGDYHLNHQQGETWLRVKGEKVLNVKEMKLSGQHNYTNALAALALADAAGLPRASSLKALTTFTGLPHRFEVVLEHNGVRWINDSKATNVGSTEAALNGLQVDGTLHLLLGGDGKSADFSPLARYLNGDNVRLYCFGRDGAQLAALRPEVAEQTETMEQAMRLLAPRVQPGDMVLLSPACASLDQFKNFEQRGNEFARLAKELG.

112–118 (GSNGKST) provides a ligand contact to ATP.

Belongs to the MurCDEF family.

Its subcellular location is the cytoplasm. The catalysed reaction is UDP-N-acetyl-alpha-D-muramoyl-L-alanine + D-glutamate + ATP = UDP-N-acetyl-alpha-D-muramoyl-L-alanyl-D-glutamate + ADP + phosphate + H(+). It functions in the pathway cell wall biogenesis; peptidoglycan biosynthesis. Cell wall formation. Catalyzes the addition of glutamate to the nucleotide precursor UDP-N-acetylmuramoyl-L-alanine (UMA). This Shigella boydii serotype 4 (strain Sb227) protein is UDP-N-acetylmuramoylalanine--D-glutamate ligase.